The primary structure comprises 354 residues: Guanine nucleotide-binding protein G(i) subunit alpha-3 (354 aa).

The N-myristoyl glycine moiety is linked to residue Gly-2. Cys-3 carries S-palmitoyl cysteine lipidation. Positions 32-354 (KEVKLLLLGA…KNNLKECGLY (323 aa)) constitute a G-alpha domain. The segment at 35–48 (KLLLLGAGESGKST) is G1 motif. GTP is bound by residues Gly-42, Glu-43, Ser-44, Gly-45, Lys-46, Ser-47, Thr-48, Asp-150, Ser-151, Leu-175, Arg-176, Thr-177, Arg-178, Val-179, Lys-180, Thr-181, Val-201, and Gly-203. Residues Glu-43, Ser-44, Gly-45, Lys-46, Ser-47, and Thr-48 each coordinate GDP. Ser-47 contributes to the Mg(2+) binding site. Residues Ser-151, Leu-175, Arg-176, Thr-177, and Arg-178 each contribute to the GDP site. The tract at residues 173-181 (DVLRTRVKT) is G2 motif. Arg-178 is modified (ADP-ribosylarginine; by cholera toxin). Thr-181 contributes to the Mg(2+) binding site. Residues 196–205 (FKMFDVGGQR) form a G3 motif region. At Gln-204 the chain carries Deamidated glutamine; by Photorhabdus PAU_02230. The G4 motif stretch occupies residues 265 to 272 (ILFLNKKD). Residues Asn-269, Lys-270, Asp-272, Leu-273, Cys-325, Ala-326, and Thr-327 each coordinate GTP. 3 residues coordinate GDP: Asn-269, Lys-270, and Asp-272. Residues 324-329 (TCATDT) form a G5 motif region. Cys-325 and Ala-326 together coordinate GDP. Cys-351 bears the ADP-ribosylcysteine; by pertussis toxin mark.

Belongs to the G-alpha family. G(i/o/t/z) subfamily. In terms of assembly, heterotrimeric G proteins are composed of 3 units; alpha, beta and gamma. The alpha subunit contains the guanine nucleotide binding site. GTP binding causes dissociation of the heterotrimer, liberating the individual subunits so that they can interact with downstream effector proteins. Forms a complex with CCDC88A/GIV and EGFR which leads to enhanced EGFR signaling and triggering of cell migration; ligand stimulation is required for recruitment of GNAI3 to the complex. Interacts (inactive GDP-bound form) with CCDC88A/GIV (via GBA motif); the interaction leads to activation of GNAI3. Interacts (inactive GDP-bound form) with CCDC88C/DAPLE (via GBA motif); the interaction leads to activation of GNAI3. Interacts (inactive GDP-bound form) with NUCB1 (via GBA motif) and NUCB2 (via GBA motif); the interaction leads to activation of GNAI3. Interacts (inactive GDP-bound form) with PLCD4 (via GBA motif); the interaction leads to activation of GNAI3. Interacts with INSR; the interaction is probably mediated by CCDC88A/GIV. Interacts with GPSM1. Interacts (GDP-bound form) with GPSM2 (via GoLoco domains). Does not interact with RGS2. Interacts with RGS8 and RGS10; this strongly enhances the intrinsic GTPase activity. Interacts with RGS16; this strongly enhances the intrinsic GTPase activity. Interacts with RGS12. Interacts (via active GTP- or inactive GDP-bound form) with RGS14. Interacts (via active GTP-bound form) with TRPC5 (via ANK repeats) in a homotetrameric ion channel; the interaction is direct and activates the channel activity. In terms of processing, (Microbial infection) Deamidated at Gln-204 by Photorhabdus asymbiotica toxin PAU_02230, blocking GTP hydrolysis of heterotrimeric GNAQ or GNA11 and G-alphai (GNAI1, GNAI2 or GNAI3) proteins, thereby activating RhoA.

It localises to the cytoplasm. Its subcellular location is the cell membrane. The protein resides in the cytoskeleton. The protein localises to the microtubule organizing center. It is found in the centrosome. Heterotrimeric guanine nucleotide-binding proteins (G proteins) function as transducers downstream of G protein-coupled receptors (GPCRs) in numerous signaling cascades. The alpha chain contains the guanine nucleotide binding site and alternates between an active, GTP-bound state and an inactive, GDP-bound state. Signaling by an activated GPCR promotes GDP release and GTP binding. The alpha subunit has a low GTPase activity that converts bound GTP to GDP, thereby terminating the signal. Both GDP release and GTP hydrolysis are modulated by numerous regulatory proteins. Signaling is mediated via effector proteins, such as adenylate cyclase. Inhibits adenylate cyclase activity, leading to decreased intracellular cAMP levels. Stimulates the activity of receptor-regulated K(+) channels. The active GTP-bound form prevents the association of RGS14 with centrosomes and is required for the translocation of RGS14 from the cytoplasm to the plasma membrane. May play a role in cell division. The active GTP-bound form activates the calcium permeant TRPC5 ion channels. The sequence is that of Guanine nucleotide-binding protein G(i) subunit alpha-3 (GNAI3) from Homo sapiens (Human).